A 271-amino-acid polypeptide reads, in one-letter code: Mediator of RNA polymerase II transcription subunit 18 (271 aa).

The tract at residues 89 to 119 is disordered; the sequence is FGGNPSSSGDPDVSMSGLEEKPSSSSSSYSY.

This sequence belongs to the Mediator complex subunit 18 family. As to quaternary structure, component of the Mediator complex.

It is found in the nucleus. In terms of biological role, component of the Mediator complex, a coactivator involved in the regulated transcription of nearly all RNA polymerase II-dependent genes. Mediator functions as a bridge to convey information from gene-specific regulatory proteins to the basal RNA polymerase II transcription machinery. Mediator is recruited to promoters by direct interactions with regulatory proteins and serves as a scaffold for the assembly of a functional preinitiation complex with RNA polymerase II and the general transcription factors. This is Mediator of RNA polymerase II transcription subunit 18 (srb5) from Aspergillus niger (strain ATCC MYA-4892 / CBS 513.88 / FGSC A1513).